Here is a 349-residue protein sequence, read N- to C-terminus: Putative transport protein YhhT (349 aa).

Topologically, residues 1–10 are cytoplasmic; that stretch reads METPQPDKTG. Residues 11-31 form a helical membrane-spanning segment; that stretch reads MHILLKLASLVVILAGIHAAA. Residue aspartate 32 is a topological domain, periplasmic. Residues 33–53 traverse the membrane as a helical segment; it reads IIVQLLLALFFAIVLNPLVTW. Over 54 to 62 the chain is Cytoplasmic; sequence FIRRGVQRP. The helical transmembrane segment at 63–83 threads the bilayer; sequence VAITIVVVVMLIALTALVGVL. Topologically, residues 84–142 are periplasmic; that stretch reads AASFNEFISMLPKFNKELTRKLFKLQEMLPFLNLHMSPERMLQRMDSEKVVTFTTALMT. The helical transmembrane segment at 143-163 threads the bilayer; sequence GLSGAMASVLLLVMTVVFMLF. Residues 164 to 208 are Cytoplasmic-facing; it reads EVRHVPYKMRFALNNPQIHIAGLHRALKGVSHYLALKTLLSLWTG. A helical membrane pass occupies residues 209-229; that stretch reads VIVWLGLELMGVQFALMWAVL. The Periplasmic segment spans residues 230–234; that stretch reads AFLLN. Residues 235-255 traverse the membrane as a helical segment; that stretch reads YVPNIGAVISAVPPMIQVLLF. The Cytoplasmic portion of the chain corresponds to 256-257; it reads NG. A helical membrane pass occupies residues 258-278; that stretch reads VYECILVGALFLVVHMVIGNI. At 279-292 the chain is on the periplasmic side; the sequence is LEPRMMGHRLGMST. A helical transmembrane segment spans residues 293-313; that stretch reads MVVFLSLLIWGWLLGPVGMLL. Topologically, residues 314–349 are cytoplasmic; that stretch reads SVPLTSVCKIWMETTKGGSKLAILLGPGRPKSRLPG.

The protein belongs to the autoinducer-2 exporter (AI-2E) (TC 2.A.86) family.

Its subcellular location is the cell inner membrane. This chain is Putative transport protein YhhT (yhhT), found in Escherichia coli O157:H7.